Reading from the N-terminus, the 451-residue chain is MKPDLSSLWQECLLQLQDQISLTDFSTWLRPLQADFSVQNTIVLYASNVFIKQKVDESYLAQLTKVAQELSGNAELVVQVKVGVKPEPKPAQPSALPTHHNKEENKPQTVIRSYLNPKHVFENFVEGKSNQLARAVAQKVADNPGEPSSNPLFLYGGTGLGKTHLLHAIGNGILSRNTNARVLYIHANNFMQQMVNAVRDNKMDEFKKFYRSLDALLVDDIQFFAEKEKTQEEFFHIFNNLFDTGRQIILTSDRYPKEIEKLEERLKSRFGWGLTTAIEPPELETRVAILLKKAEEKNIYLPEEVAFFIGQKLRTNVRDLEGALNRVSANAEFMGAAITIDFVRETLKDMLALQDKLVTVENIQKVVAEYYRIKVSDLKGKSRSRSIARPRQLAMALSKELTNRSLPEIGKNFGDKDHTTVLHACRKIAELREQEHSLEEDWSNLIRTLSV.

The domain I, interacts with DnaA modulators stretch occupies residues 1–94; it reads MKPDLSSLWQ…KPEPKPAQPS (94 aa). The interval 87-106 is disordered; that stretch reads EPKPAQPSALPTHHNKEENK. A domain II region spans residues 95-113; the sequence is ALPTHHNKEENKPQTVIRS. The segment at 114 to 331 is domain III, AAA+ region; the sequence is YLNPKHVFEN…GALNRVSANA (218 aa). ATP-binding residues include glycine 159, glycine 161, lysine 162, and threonine 163. Residues 332-451 form a domain IV, binds dsDNA region; sequence EFMGAAITID…WSNLIRTLSV (120 aa).

The protein belongs to the DnaA family. As to quaternary structure, oligomerizes as a right-handed, spiral filament on DNA at oriC.

It is found in the cytoplasm. Functionally, plays an essential role in the initiation and regulation of chromosomal replication. ATP-DnaA binds to the origin of replication (oriC) to initiate formation of the DNA replication initiation complex once per cell cycle. Binds the DnaA box (a 9 base pair repeat at the origin) and separates the double-stranded (ds)DNA. Forms a right-handed helical filament on oriC DNA; dsDNA binds to the exterior of the filament while single-stranded (ss)DNA is stabiized in the filament's interior. The ATP-DnaA-oriC complex binds and stabilizes one strand of the AT-rich DNA unwinding element (DUE), permitting loading of DNA polymerase. After initiation quickly degrades to an ADP-DnaA complex that is not apt for DNA replication. Binds acidic phospholipids. This chain is Chromosomal replication initiator protein DnaA, found in Pasteurella multocida (strain Pm70).